Reading from the N-terminus, the 399-residue chain is 26S proteasome regulatory subunit S10B homolog B (399 aa).

180–187 serves as a coordination point for ATP; sequence GPPGTGKT. K203 participates in a covalent cross-link: Glycyl lysine isopeptide (Lys-Gly) (interchain with G-Cter in ubiquitin).

It belongs to the AAA ATPase family. In terms of assembly, component of the 19S regulatory particle (RP/PA700) base subcomplex of the 26S proteasome. The 26S proteasome is composed of a core protease (CP), known as the 20S proteasome, capped at one or both ends by the 19S regulatory particle (RP/PA700). The RP/PA700 complex is composed of at least 17 different subunits in two subcomplexes, the base and the lid, which form the portions proximal and distal to the 20S proteolytic core, respectively.

The protein localises to the cytoplasm. Its subcellular location is the nucleus. The 26S proteasome is involved in the ATP-dependent degradation of ubiquitinated proteins. The regulatory (or ATPase) complex confers ATP dependency and substrate specificity to the 26S complex. The polypeptide is 26S proteasome regulatory subunit S10B homolog B (RPT4B) (Arabidopsis thaliana (Mouse-ear cress)).